The chain runs to 300 residues: Probable mitochondrial 2-oxodicarboxylate carrier (300 aa).

The interval 1-20 is disordered; it reads MTSKGNAGNPPTPTPAPVKS. Solcar repeat units follow at residues 21–104, 114–200, and 209–295; these read QPLW…YEKQ, PTQM…IKSA, and GVLV…VMKL. Helical transmembrane passes span 27-47, 74-93, 120-140, 171-191, 209-229, and 278-298; these read LVSG…LDVV, LKMY…KRAI, IGSG…FELV, GFFK…GGYF, GVLV…TMLN, and LGPG…LLAG.

The protein belongs to the mitochondrial carrier (TC 2.A.29) family.

The protein localises to the mitochondrion inner membrane. It catalyses the reaction 2-oxoadipate(in) + 2-oxoglutarate(out) = 2-oxoadipate(out) + 2-oxoglutarate(in). The catalysed reaction is hexanedioate(in) + 2-oxoglutarate(out) = hexanedioate(out) + 2-oxoglutarate(in). It carries out the reaction L-2-aminoadipate(in) + 2-oxoglutarate(out) = L-2-aminoadipate(out) + 2-oxoglutarate(in). The enzyme catalyses glutarate(in) + 2-oxoglutarate(out) = glutarate(out) + 2-oxoglutarate(in). It catalyses the reaction 2-oxoheptanedioate(in) + 2-oxoglutarate(out) = 2-oxoheptanedioate(out) + 2-oxoglutarate(in). The catalysed reaction is heptanedioate(in) + 2-oxoglutarate(out) = heptanedioate(out) + 2-oxoglutarate(in). It carries out the reaction citrate(in) + 2-oxoglutarate(out) = citrate(out) + 2-oxoglutarate(in). In terms of biological role, transports dicarboxylates across the inner membranes of mitochondria by a counter-exchange mechanism. Can transport 2-oxoadipate (2-oxohexanedioate), 2-oxoglutarate, adipate (hexanedioate), glutarate, and to a lesser extent, pimelate (heptanedioate), 2-oxopimelate (2-oxoheptanedioate), 2-aminoadipate (2-aminohexanedioate), oxaloacetate, and citrate. Plays a central role in catabolism of lysine, hydroxylysine, and tryptophan, by transporting common metabolite intermediates (such as 2-oxoadipate) into the mitochondria, where it is converted into acetyl-CoA and can enter the citric acid (TCA) cycle. This chain is Probable mitochondrial 2-oxodicarboxylate carrier (mcfT), found in Dictyostelium discoideum (Social amoeba).